A 397-amino-acid polypeptide reads, in one-letter code: Formate-dependent phosphoribosylglycinamide formyltransferase (397 aa).

N(1)-(5-phospho-beta-D-ribosyl)glycinamide is bound by residues 21-22 (EL) and Glu81. Residues Arg113, Lys154, 194–197 (EEFV), and Glu202 each bind ATP. Residues 118–312 (RFAAEKLKLP…EFQIHVRSAI (195 aa)) enclose the ATP-grasp domain. Residues Glu271 and Glu283 each contribute to the Mg(2+) site. N(1)-(5-phospho-beta-D-ribosyl)glycinamide is bound by residues Asp290, Lys361, and 368-369 (RR).

Belongs to the PurK/PurT family. Homodimer.

The enzyme catalyses N(1)-(5-phospho-beta-D-ribosyl)glycinamide + formate + ATP = N(2)-formyl-N(1)-(5-phospho-beta-D-ribosyl)glycinamide + ADP + phosphate + H(+). Its pathway is purine metabolism; IMP biosynthesis via de novo pathway; N(2)-formyl-N(1)-(5-phospho-D-ribosyl)glycinamide from N(1)-(5-phospho-D-ribosyl)glycinamide (formate route): step 1/1. Its function is as follows. Involved in the de novo purine biosynthesis. Catalyzes the transfer of formate to 5-phospho-ribosyl-glycinamide (GAR), producing 5-phospho-ribosyl-N-formylglycinamide (FGAR). Formate is provided by PurU via hydrolysis of 10-formyl-tetrahydrofolate. The sequence is that of Formate-dependent phosphoribosylglycinamide formyltransferase from Saccharolobus solfataricus (strain ATCC 35092 / DSM 1617 / JCM 11322 / P2) (Sulfolobus solfataricus).